The following is a 216-amino-acid chain: GTP cyclohydrolase 1 (216 aa).

Residues 1–33 form a disordered region; sequence MPQARGEGATPPTSLPNPSLKGVPLPDNPNNLE. A compositionally biased stretch (low complexity) spans 24 to 33; that stretch reads PLPDNPNNLE. Zn(2+) is bound by residues C102, H105, and C173.

Belongs to the GTP cyclohydrolase I family. In terms of assembly, toroid-shaped homodecamer, composed of two pentamers of five dimers.

It carries out the reaction GTP + H2O = 7,8-dihydroneopterin 3'-triphosphate + formate + H(+). It functions in the pathway cofactor biosynthesis; 7,8-dihydroneopterin triphosphate biosynthesis; 7,8-dihydroneopterin triphosphate from GTP: step 1/1. In Deinococcus radiodurans (strain ATCC 13939 / DSM 20539 / JCM 16871 / CCUG 27074 / LMG 4051 / NBRC 15346 / NCIMB 9279 / VKM B-1422 / R1), this protein is GTP cyclohydrolase 1 (folE).